The primary structure comprises 288 residues: Acetylglutamate kinase (288 aa).

Residues 73 to 74, Arg95, and Asn186 each bind substrate; that span reads GG.

It belongs to the acetylglutamate kinase family. ArgB subfamily.

It is found in the cytoplasm. The enzyme catalyses N-acetyl-L-glutamate + ATP = N-acetyl-L-glutamyl 5-phosphate + ADP. It functions in the pathway amino-acid biosynthesis; L-arginine biosynthesis; N(2)-acetyl-L-ornithine from L-glutamate: step 2/4. Its function is as follows. Catalyzes the ATP-dependent phosphorylation of N-acetyl-L-glutamate. This chain is Acetylglutamate kinase, found in Pelagibacter ubique (strain HTCC1062).